A 96-amino-acid polypeptide reads, in one-letter code: Putative pterin-4-alpha-carbinolamine dehydratase (96 aa).

This sequence belongs to the pterin-4-alpha-carbinolamine dehydratase family.

The catalysed reaction is (4aS,6R)-4a-hydroxy-L-erythro-5,6,7,8-tetrahydrobiopterin = (6R)-L-erythro-6,7-dihydrobiopterin + H2O. The protein is Putative pterin-4-alpha-carbinolamine dehydratase of Prochlorococcus marinus (strain SARG / CCMP1375 / SS120).